The following is a 214-amino-acid chain: Glycerol-3-phosphate acyltransferase (214 aa).

5 helical membrane-spanning segments follow: residues 4–24 (LIVAVVAYLIGSVSFAVIVSA), 52–72 (AAILTLIGDAFKGWLPVWFVV), 82–102 (ETSVAIASVAVFLGHLYPVFF), 118–138 (LAINPILGVATLLTWLIVAFF), and 159–179 (FLFGPHVIALAIVVMSSLLVW).

Belongs to the PlsY family. Probably interacts with PlsX.

It localises to the cell inner membrane. It carries out the reaction an acyl phosphate + sn-glycerol 3-phosphate = a 1-acyl-sn-glycero-3-phosphate + phosphate. The protein operates within lipid metabolism; phospholipid metabolism. In terms of biological role, catalyzes the transfer of an acyl group from acyl-phosphate (acyl-PO(4)) to glycerol-3-phosphate (G3P) to form lysophosphatidic acid (LPA). This enzyme utilizes acyl-phosphate as fatty acyl donor, but not acyl-CoA or acyl-ACP. The protein is Glycerol-3-phosphate acyltransferase of Paraburkholderia phytofirmans (strain DSM 17436 / LMG 22146 / PsJN) (Burkholderia phytofirmans).